A 468-amino-acid polypeptide reads, in one-letter code: MSSGKIAQVVGPVVDVAFATGDKLPEINNALVVYTDEEKSRRIVLEVALELGEGVVRTIAMESTDGLTRGLEVLDTGRPISVPVGKETLGRVFNVLGDTIDMEAPFADDAEREPIHKKAPTFDELSTSTEILETGIKVIDLLAPYLKGGKVGLFGGAGVGKTVLIQELIHNIAQEHGGISVFTGVGERSREGNDLYWEMKESGVIEKTAMVFGQMNEPPGARMRVALTGLTIAEYFRDVEGQDVLLFIDNIFRFTQAGSEVSALLGRMPSAVGYQPTLATEMGQLQERITSTKKGSVTSIQAIYVPADDYTDPAPATAFAHLDSTTNLERKLTQMGIYPAVDPLASSSRALSPEIVGEEHYAVATEVQRVLQRYRELQDIIAILGMDELSDEDKTLVARARRIQFFLSQNFNVAEQFTGQPGSYVPVAETVRGFKEILEGKYDNLPEDAFRSVGPIEDVVAKAKAMGY.

155-162 (GGAGVGKT) contributes to the ATP binding site.

Belongs to the ATPase alpha/beta chains family. As to quaternary structure, F-type ATPases have 2 components, CF(1) - the catalytic core - and CF(0) - the membrane proton channel. CF(1) has five subunits: alpha(3), beta(3), gamma(1), delta(1), epsilon(1). CF(0) has three main subunits: a(1), b(2) and c(9-12). The alpha and beta chains form an alternating ring which encloses part of the gamma chain. CF(1) is attached to CF(0) by a central stalk formed by the gamma and epsilon chains, while a peripheral stalk is formed by the delta and b chains.

It is found in the cell membrane. The enzyme catalyses ATP + H2O + 4 H(+)(in) = ADP + phosphate + 5 H(+)(out). Its function is as follows. Produces ATP from ADP in the presence of a proton gradient across the membrane. The catalytic sites are hosted primarily by the beta subunits. In Streptococcus thermophilus (strain ATCC BAA-250 / LMG 18311), this protein is ATP synthase subunit beta.